We begin with the raw amino-acid sequence, 223 residues long: uncharacterized protein (223 aa).

An HTH tetR-type domain is found at 11-71 (EATFESFIDA…YLLEKRQMKK (61 aa)). Residues 34–53 (SVEDISRAAGYSKGAFYVHF) constitute a DNA-binding region (H-T-H motif).

This is an uncharacterized protein from Bacillus subtilis (strain 168).